The following is a 153-amino-acid chain: Superoxide dismutase [Cu-Zn] (153 aa).

3 residues coordinate Cu cation: histidine 45, histidine 47, and histidine 62. A disulfide bridge connects residues cysteine 56 and cysteine 145. Residues histidine 62, histidine 70, histidine 79, and aspartate 82 each contribute to the Zn(2+) site. Histidine 119 is a Cu cation binding site.

The protein belongs to the Cu-Zn superoxide dismutase family. In terms of assembly, homodimer. Cu cation serves as cofactor. Requires Zn(2+) as cofactor.

The protein resides in the cytoplasm. It carries out the reaction 2 superoxide + 2 H(+) = H2O2 + O2. Destroys radicals which are normally produced within the cells and which are toxic to biological systems. This Schistosoma mansoni (Blood fluke) protein is Superoxide dismutase [Cu-Zn] (SOD).